The primary structure comprises 634 residues: Chaperone protein HtpG (634 aa).

The tract at residues 1 to 342 (MTVASHKETL…SNDLPLNISR (342 aa)) is a; substrate-binding. The b stretch occupies residues 343–559 (EILQNNRVID…QHDMSGYLER (217 aa)). The interval 560-634 (LLKEAGQQAP…LNSLLLAMAD (75 aa)) is c.

The protein belongs to the heat shock protein 90 family. Homodimer.

The protein localises to the cytoplasm. In terms of biological role, molecular chaperone. Has ATPase activity. This is Chaperone protein HtpG from Nitrosococcus oceani (strain ATCC 19707 / BCRC 17464 / JCM 30415 / NCIMB 11848 / C-107).